The primary structure comprises 368 residues: RNA polymerase sigma factor SigA (368 aa).

The segment covering N71 to N83 has biased composition (basic and acidic residues). The segment at N71 to P90 is disordered. Positions L135–T205 are sigma-70 factor domain-2. The Interaction with polymerase core subunit RpoC motif lies at D159–Q162. Residues E214–H290 form a sigma-70 factor domain-3 region. Residues V303–H356 are sigma-70 factor domain-4. Positions L329 to A348 form a DNA-binding region, H-T-H motif.

Belongs to the sigma-70 factor family. RpoD/SigA subfamily. In terms of assembly, interacts transiently with the RNA polymerase catalytic core.

It localises to the cytoplasm. In terms of biological role, sigma factors are initiation factors that promote the attachment of RNA polymerase to specific initiation sites and are then released. This sigma factor is the primary sigma factor during exponential growth. In Staphylococcus epidermidis (strain ATCC 35984 / DSM 28319 / BCRC 17069 / CCUG 31568 / BM 3577 / RP62A), this protein is RNA polymerase sigma factor SigA.